The primary structure comprises 427 residues: Enolase (427 aa).

Gln-163 contributes to the (2R)-2-phosphoglycerate binding site. Residue Glu-205 is the Proton donor of the active site. Asp-242, Glu-285, and Asp-312 together coordinate Mg(2+). Residues Lys-337, Arg-366, Ser-367, and Lys-388 each contribute to the (2R)-2-phosphoglycerate site. Residue Lys-337 is the Proton acceptor of the active site.

Belongs to the enolase family. The cofactor is Mg(2+).

Its subcellular location is the cytoplasm. The protein resides in the secreted. It is found in the cell surface. It carries out the reaction (2R)-2-phosphoglycerate = phosphoenolpyruvate + H2O. The protein operates within carbohydrate degradation; glycolysis; pyruvate from D-glyceraldehyde 3-phosphate: step 4/5. In terms of biological role, catalyzes the reversible conversion of 2-phosphoglycerate (2-PG) into phosphoenolpyruvate (PEP). It is essential for the degradation of carbohydrates via glycolysis. In Rhodopseudomonas palustris (strain BisB5), this protein is Enolase.